The following is a 121-amino-acid chain: Spermidine export protein MdtJ (121 aa).

4 consecutive transmembrane segments (helical) span residues 1–21 (MYIY…GTLS), 32–52 (GGFI…SFAV), 55–75 (IALG…ITLF), and 82–102 (ESLS…IVLI).

Belongs to the drug/metabolite transporter (DMT) superfamily. Small multidrug resistance (SMR) (TC 2.A.7.1) family. MdtJ subfamily. As to quaternary structure, forms a complex with MdtI.

It localises to the cell inner membrane. In terms of biological role, catalyzes the excretion of spermidine. In Escherichia coli O139:H28 (strain E24377A / ETEC), this protein is Spermidine export protein MdtJ.